The sequence spans 337 residues: MNARVEHRGRLDEREVAAVLTVVEAATEADGVRPLNEHVMLHLRYGGDERAGAVLLYVGDDLAGYAHVDPTDPVEGPSGELVIHPAFRGQGHGRHLLEAVLDRTGGRLRLWAHGGHPGAEALALSTGFTKIRSLWQMRRSLFAAIPGFELPDGVRLRTFAPGSPDEEAWVALNAKAFAHHPEQGSWTLEDLKRREQEPWFDPAGFFLAERPTGSGDGDVADGGSTDGGPADSGSADGGAGEGGTGDGNRLIGFHWTKVHGDGGHGHEPIGEVYVVGVDPAEQGGGLGRSLTLAGLSHLRARGLAQVMLYVDESNTAAIRLYEKLGFTRWDVDVMYRK.

N-acetyltransferase domains follow at residues 11–151 (LDER…FELP) and 154–337 (VRLR…MYRK). A 1D-myo-inositol 2-(L-cysteinylamino)-2-deoxy-alpha-D-glucopyranoside-binding site is contributed by E37. 81 to 83 (LVI) contacts acetyl-CoA. E182 provides a ligand contact to 1D-myo-inositol 2-(L-cysteinylamino)-2-deoxy-alpha-D-glucopyranoside. The interval 210–246 (RPTGSGDGDVADGGSTDGGPADSGSADGGAGEGGTGD) is disordered. Over residues 221–234 (DGGSTDGGPADSGS) the composition is skewed to low complexity. Residues 235 to 246 (ADGGAGEGGTGD) show a composition bias toward gly residues. 1D-myo-inositol 2-(L-cysteinylamino)-2-deoxy-alpha-D-glucopyranoside-binding residues include K257 and E271. Residues 275 to 277 (VGV) and 282 to 288 (QGGGLGR) contribute to the acetyl-CoA site. A 1D-myo-inositol 2-(L-cysteinylamino)-2-deoxy-alpha-D-glucopyranoside-binding site is contributed by Y309. 314–319 (NTAAIR) serves as a coordination point for acetyl-CoA.

This sequence belongs to the acetyltransferase family. MshD subfamily. In terms of assembly, monomer.

The catalysed reaction is 1D-myo-inositol 2-(L-cysteinylamino)-2-deoxy-alpha-D-glucopyranoside + acetyl-CoA = mycothiol + CoA + H(+). Its function is as follows. Catalyzes the transfer of acetyl from acetyl-CoA to desacetylmycothiol (Cys-GlcN-Ins) to form mycothiol. The sequence is that of Mycothiol acetyltransferase from Streptosporangium roseum (strain ATCC 12428 / DSM 43021 / JCM 3005 / KCTC 9067 / NCIMB 10171 / NRRL 2505 / NI 9100).